Here is a 170-residue protein sequence, read N- to C-terminus: Lipoprotein signal peptidase (170 aa).

3 consecutive transmembrane segments (helical) span residues Trp-12–Ala-32, Trp-67–Leu-87, and Ser-93–Val-113. Catalysis depends on residues Asp-123 and Asp-141. A helical membrane pass occupies residues Phe-137–Phe-157.

Belongs to the peptidase A8 family.

The protein resides in the cell inner membrane. The enzyme catalyses Release of signal peptides from bacterial membrane prolipoproteins. Hydrolyzes -Xaa-Yaa-Zaa-|-(S,diacylglyceryl)Cys-, in which Xaa is hydrophobic (preferably Leu), and Yaa (Ala or Ser) and Zaa (Gly or Ala) have small, neutral side chains.. It functions in the pathway protein modification; lipoprotein biosynthesis (signal peptide cleavage). Functionally, this protein specifically catalyzes the removal of signal peptides from prolipoproteins. In Shewanella oneidensis (strain ATCC 700550 / JCM 31522 / CIP 106686 / LMG 19005 / NCIMB 14063 / MR-1), this protein is Lipoprotein signal peptidase.